The chain runs to 268 residues: Thiazole synthase (268 aa).

Catalysis depends on lysine 100, which acts as the Schiff-base intermediate with DXP. Residues glycine 161, 187–188 (AG), and 209–210 (NT) contribute to the 1-deoxy-D-xylulose 5-phosphate site. The interval 248–268 (ATPSSPSEGMITGSPHSAANN) is disordered.

The protein belongs to the ThiG family. In terms of assembly, homotetramer. Forms heterodimers with either ThiH or ThiS.

The protein resides in the cytoplasm. It catalyses the reaction [ThiS sulfur-carrier protein]-C-terminal-Gly-aminoethanethioate + 2-iminoacetate + 1-deoxy-D-xylulose 5-phosphate = [ThiS sulfur-carrier protein]-C-terminal Gly-Gly + 2-[(2R,5Z)-2-carboxy-4-methylthiazol-5(2H)-ylidene]ethyl phosphate + 2 H2O + H(+). The protein operates within cofactor biosynthesis; thiamine diphosphate biosynthesis. In terms of biological role, catalyzes the rearrangement of 1-deoxy-D-xylulose 5-phosphate (DXP) to produce the thiazole phosphate moiety of thiamine. Sulfur is provided by the thiocarboxylate moiety of the carrier protein ThiS. In vitro, sulfur can be provided by H(2)S. This is Thiazole synthase from Nitrosomonas eutropha (strain DSM 101675 / C91 / Nm57).